Reading from the N-terminus, the 164-residue chain is Large ribosomal subunit protein uL10 (164 aa).

It belongs to the universal ribosomal protein uL10 family. As to quaternary structure, part of the ribosomal stalk of the 50S ribosomal subunit. The N-terminus interacts with L11 and the large rRNA to form the base of the stalk. The C-terminus forms an elongated spine to which L12 dimers bind in a sequential fashion forming a multimeric L10(L12)X complex.

Forms part of the ribosomal stalk, playing a central role in the interaction of the ribosome with GTP-bound translation factors. The polypeptide is Large ribosomal subunit protein uL10 (Chromobacterium violaceum (strain ATCC 12472 / DSM 30191 / JCM 1249 / CCUG 213 / NBRC 12614 / NCIMB 9131 / NCTC 9757 / MK)).